The following is a 90-amino-acid chain: U7-theraphotoxin-Hhn1h (90 aa).

The signal sequence occupies residues 1 to 19; it reads MKTAIFTVVLALAVFAVLS. The propeptide occupies 20-50; that stretch reads FGWEANEKALSEEFTELIHEKEAASETEARE. Intrachain disulfides connect Cys51–Cys65, Cys58–Cys70, and Cys64–Cys81.

The protein belongs to the neurotoxin 10 (Hwtx-1) family. 13 (Hntx-13) subfamily. As to expression, expressed by the venom gland.

The protein resides in the secreted. Functionally, ion channel inhibitor. This Cyriopagopus hainanus (Chinese bird spider) protein is U7-theraphotoxin-Hhn1h.